The primary structure comprises 22 residues: NADH dehydrogenase [ubiquinone] 1 alpha subcomplex subunit 9 (22 aa).

A disordered region spans residues A1 to S22.

The protein belongs to the complex I NDUFA9 subunit family. Complex I is composed of about 45 different subunits. Requires FAD as cofactor.

It is found in the mitochondrion matrix. Its function is as follows. Accessory subunit of the mitochondrial membrane respiratory chain NADH dehydrogenase (Complex I), that is believed not to be involved in catalysis. Complex I functions in the transfer of electrons from NADH to the respiratory chain. The immediate electron acceptor for the enzyme is believed to be ubiquinone. The sequence is that of NADH dehydrogenase [ubiquinone] 1 alpha subcomplex subunit 9 from Solanum tuberosum (Potato).